A 972-amino-acid polypeptide reads, in one-letter code: Peptidyl-glycine alpha-amidating monooxygenase (972 aa).

A signal peptide spans 1-20; sequence MAGFRSLLVLLLVFPSGCVG. Residues 1-494 form a peptidylglycine alpha-hydroxylating monooxygenase region; it reads MAGFRSLLVL…EGTWEPEHTG (494 aa). A propeptide spanning residues 21–30 is cleaved from the precursor; it reads FRSPLSVFKR. Topologically, residues 31-873 are intragranular; it reads FKETTRSFSN…VPAVLITTLL (843 aa). Intrachain disulfides connect Cys-42–Cys-181, Cys-76–Cys-121, Cys-109–Cys-126, Cys-222–Cys-329, and Cys-288–Cys-310. Cu(2+) contacts are provided by His-102 and His-103. Cu(2+) is bound by residues His-167, His-237, His-239, and Met-309. A peptidyl-alpha-hydroxyglycine alpha-amidating lyase region spans residues 495-817; sequence DFHVEEALDW…STEKMEHRSV (323 aa). 4 NHL repeats span residues 498–541, 567–608, 617–662, and 670–714; these read VEEA…NSFD, AAVL…LDPK, LGRS…FSPS, and GEAS…FKTD. Val-517 contacts Ca(2+). Arg-530 is an a protein binding site. His-582 lines the Zn(2+) pocket. Ca(2+) is bound at residue Leu-584. A disulfide bridge connects residues Cys-631 and Cys-652. Residue Tyr-651 participates in a protein binding. His-687 contributes to the Zn(2+) binding site. Cys-699 and Cys-710 are joined by a disulfide. An a protein-binding site is contributed by Arg-703. Asn-762 carries N-linked (GlcNAc...) asparagine glycosylation. Residues 766–809 form an NHL 5 repeat; it reads GEIIDVFKPVRKHFDMPHDIAASEDGTVYVGDAHTNTVWKFTST. His-783 provides a ligand contact to Zn(2+). Asp-784 contacts Ca(2+). A helical transmembrane segment spans residues 874–897; that stretch reads VIPVVVLLAIALFIRWKKSRAFGD. Residues 898–972 are Cytoplasmic-facing; the sequence is SERKLEASSG…APPPAPAPSS (75 aa). The interval 925–942 is interaction with RASSF9; it reads NFFASRKGYSRKGFDRLS. Phosphoserine occurs at positions 929 and 942. A disordered region spans residues 937–972; it reads GFDRLSTEGSDQEKDEDASESEEEYSAPPPAPAPSS. Residue Thr-943 is modified to Phosphothreonine. A Phosphoserine; by UHMK1 modification is found at Ser-946. Residues 949-961 are compositionally biased toward acidic residues; it reads EKDEDASESEEEY. Phosphoserine is present on Ser-957. Residues 963–972 are compositionally biased toward pro residues; sequence APPPAPAPSS.

This sequence in the C-terminal section; belongs to the peptidyl-alpha-hydroxyglycine alpha-amidating lyase family. It in the N-terminal section; belongs to the copper type II ascorbate-dependent monooxygenase family. Monomer. Interacts with RASSF9. Zn(2+) is required as a cofactor. Cu(2+) serves as cofactor.

Its subcellular location is the cytoplasmic vesicle. The protein resides in the secretory vesicle membrane. It catalyses the reaction a [peptide]-C-terminal glycine + 2 L-ascorbate + O2 = a [peptide]-C-terminal (2S)-2-hydroxyglycine + 2 monodehydro-L-ascorbate radical + H2O. The enzyme catalyses a [peptide]-C-terminal (2S)-2-hydroxyglycine = a [peptide]-C-terminal amide + glyoxylate. The catalysed reaction is N-dodecanoylglycine + 2 L-ascorbate + O2 = N-dodecanoyl-(2S)-hydroxyglycine + 2 monodehydro-L-ascorbate radical + H2O. It carries out the reaction N-dodecanoyl-(2S)-hydroxyglycine = dodecanamide + glyoxylate. It catalyses the reaction N-(9Z,12Z,15Z)-octadecatrienoylglycine + 2 L-ascorbate + O2 = N-(9Z,12Z,15Z)-octadecatrienoyl-(2S)-hydroxyglycine + 2 monodehydro-L-ascorbate radical + H2O. The enzyme catalyses N-(9Z,12Z,15Z)-octadecatrienoyl-(2S)-hydroxyglycine = (9Z,12Z,15Z)-octadecatrienamide + glyoxylate. The catalysed reaction is N-(9Z-octadecenoyl)glycine + 2 L-ascorbate + O2 = N-(9Z-octadecenoyl)-(2S)-hydroxyglycine + 2 monodehydro-L-ascorbate radical + H2O. It carries out the reaction N-(9Z-octadecenoyl)-(2S)-hydroxyglycine = (9Z)-octadecenamide + glyoxylate. It catalyses the reaction N-tetradecanoylglycine + 2 L-ascorbate + O2 = N-tetradecanoyl-(2S)-hydroxyglycine + 2 monodehydro-L-ascorbate radical + H2O. The enzyme catalyses N-tetradecanoyl-(2S)-hydroxyglycine = tetradecamide + glyoxylate. The catalysed reaction is N-decanoylglycine + 2 L-ascorbate + O2 = N-decanoyl-(2S)-hydroxyglycine + 2 monodehydro-L-ascorbate radical + H2O. It carries out the reaction N-decanoyl-(2S)-hydroxyglycine = decanamide + glyoxylate. It catalyses the reaction N-octanoylglycine + 2 L-ascorbate + O2 = N-octanoyl-(2S)-hydroxyglycine + 2 monodehydro-L-ascorbate radical + H2O. The enzyme catalyses N-octanoyl-(2S)-hydroxyglycine = octanamide + glyoxylate. With respect to regulation, PAM activity is inhibited by EDTA, phenylglyoxal and diethyl pyrocarbonate. PAL activity is stimulated by cadmium and inhibited by mercury. Bifunctional enzyme that catalyzes amidation of the C-terminus of proteins. Alpha-amidation is present at the C-terminus of many endocrine hormones and neuropeptides and is required for their activity. C-terminal amidation also takes place in response to protein fragmentation triggered by oxidative stress, promoting degradation of amidated protein fragments by the proteasome. Alpha-amidation involves two sequential reactions, both of which are catalyzed by separate catalytic domains of the enzyme. The first step, catalyzed by peptidyl alpha-hydroxylating monooxygenase (PHM) domain, is the copper-, ascorbate-, and O2- dependent stereospecific hydroxylation (with S stereochemistry) at the alpha-carbon (C-alpha) of the C-terminal glycine of the peptidylglycine substrate. The second step, catalyzed by the peptidylglycine amidoglycolate lyase (PAL) domain, is the zinc-dependent cleavage of the N-C-alpha bond, producing the alpha-amidated peptide and glyoxylate. Similarly, catalyzes the two-step conversion of an N-fatty acylglycine to a primary fatty acid amide and glyoxylate. This Bos taurus (Bovine) protein is Peptidyl-glycine alpha-amidating monooxygenase (PAM).